The following is a 438-amino-acid chain: Prenyltransferase malE (438 aa).

E92 contacts substrate. Dimethylallyl diphosphate is bound by residues R106, K192, Y194, K259, Y261, Y346, and Y411.

This sequence belongs to the tryptophan dimethylallyltransferase family.

It catalyses the reaction (S)-3-(indol-3-ylmethyl)-6,7,8,8a-tetrahydropyrrolo[1,2-a]pyrazin-1-one + dimethylallyl diphosphate = (S)-3-{[2-(1,1-dimethylallyl)-indol-3-yl]methyl}-6,7,8,8a-tetrahydropyrrolo[1,2-a]pyrazin-1-one + diphosphate. The catalysed reaction is 1-hydroxy-3-(indol-3-ylmethyl)-6H,7H,8H-5lambda(5)-pyrrolo[1,2-a]pyrazine + dimethylallyl diphosphate = 1-hydroxy-3-{[2-(1,1-dimethylallyl)-indol-3-yl]methyl}-6H,7H,8H-5lambda(5)-pyrrolo[1,2-a]pyrazine + diphosphate. The protein operates within alkaloid biosynthesis. Its function is as follows. Prenyltransferase; part of the gene cluster that mediates the biosynthesis of malbrancheamide, a dichlorinated fungal indole alkaloid that belongs to a family of natural products containing a characteristic bicyclo[2.2.2]diazaoctane core. The first step of malbrancheamide biosynthesis involves coupling of L-proline and L-tryptophan by malG, a bimodular NRPS, to produce L-Pro-L-Trp aldehyde through reductive offloading. This compound undergoes spontaneous cyclization and dehydration to give a dienamine which is reverse prenylated at C-2 by malE. The other prenyltransferase present in the cluster, malB, displays modest activity, suggesting that may be a redundant gene in the pathway. Subsequently, a [4+2] Diels-Alder cyclo-addition catalyzed by the bifunctional enzyme malC forms the characteristic bicyclo[2.2.2]diazaoctane ring of premalbrancheamid. Finally, the flavin-dependent halogenase malA catalyzes the iterative dichlorination of the indole ring of premalbrancheamide to yield C-9 monochlorinated malbrancheamide B, C-8 monochlorinated isomalbrancheamide B, and dichlorinated malbrancheamide. MalA is also able to brominate premalbrancheamide at C-9 to yield malbrancheamide C, and, to a lesser extend, at C-8 to yield isomalbrancheamide C. Finally, malA can brominate C-9 monochlorinated malbrancheamide B at C-8 to yield malbrancheamide D, or C-8 monochlorinated isomalbrancheamide B at C-9 to produce isomalbrancheamide D. The sequence is that of Prenyltransferase malE from Malbranchea aurantiaca.